We begin with the raw amino-acid sequence, 582 residues long: Proline--tRNA ligase (582 aa).

This sequence belongs to the class-II aminoacyl-tRNA synthetase family. ProS type 1 subfamily. As to quaternary structure, homodimer.

The protein localises to the cytoplasm. The enzyme catalyses tRNA(Pro) + L-proline + ATP = L-prolyl-tRNA(Pro) + AMP + diphosphate. In terms of biological role, catalyzes the attachment of proline to tRNA(Pro) in a two-step reaction: proline is first activated by ATP to form Pro-AMP and then transferred to the acceptor end of tRNA(Pro). As ProRS can inadvertently accommodate and process non-cognate amino acids such as alanine and cysteine, to avoid such errors it has two additional distinct editing activities against alanine. One activity is designated as 'pretransfer' editing and involves the tRNA(Pro)-independent hydrolysis of activated Ala-AMP. The other activity is designated 'posttransfer' editing and involves deacylation of mischarged Ala-tRNA(Pro). The misacylated Cys-tRNA(Pro) is not edited by ProRS. This is Proline--tRNA ligase from Mycobacterium bovis (strain ATCC BAA-935 / AF2122/97).